The chain runs to 117 residues: Holo-[acyl-carrier-protein] synthase (117 aa).

Residues aspartate 8 and glutamate 58 each contribute to the Mg(2+) site.

This sequence belongs to the P-Pant transferase superfamily. AcpS family. It depends on Mg(2+) as a cofactor.

The protein resides in the cytoplasm. The catalysed reaction is apo-[ACP] + CoA = holo-[ACP] + adenosine 3',5'-bisphosphate + H(+). Functionally, transfers the 4'-phosphopantetheine moiety from coenzyme A to a Ser of acyl-carrier-protein. The sequence is that of Holo-[acyl-carrier-protein] synthase from Enterococcus faecalis (strain ATCC 700802 / V583).